The chain runs to 424 residues: Arginine biosynthesis bifunctional protein ArgJ (424 aa).

Substrate contacts are provided by threonine 172, lysine 198, threonine 209, glutamate 296, asparagine 419, and serine 424. Catalysis depends on threonine 209, which acts as the Nucleophile.

It belongs to the ArgJ family. In terms of assembly, heterotetramer of two alpha and two beta chains.

It is found in the cytoplasm. It catalyses the reaction N(2)-acetyl-L-ornithine + L-glutamate = N-acetyl-L-glutamate + L-ornithine. The enzyme catalyses L-glutamate + acetyl-CoA = N-acetyl-L-glutamate + CoA + H(+). It functions in the pathway amino-acid biosynthesis; L-arginine biosynthesis; L-ornithine and N-acetyl-L-glutamate from L-glutamate and N(2)-acetyl-L-ornithine (cyclic): step 1/1. It participates in amino-acid biosynthesis; L-arginine biosynthesis; N(2)-acetyl-L-ornithine from L-glutamate: step 1/4. Its function is as follows. Catalyzes two activities which are involved in the cyclic version of arginine biosynthesis: the synthesis of N-acetylglutamate from glutamate and acetyl-CoA as the acetyl donor, and of ornithine by transacetylation between N(2)-acetylornithine and glutamate. This is Arginine biosynthesis bifunctional protein ArgJ from Gluconobacter oxydans (strain 621H) (Gluconobacter suboxydans).